The primary structure comprises 362 residues: Isopentenyl-diphosphate delta-isomerase (362 aa).

A substrate-binding site is contributed by 5 to 6 (RK). FMN is bound by residues 63–65 (AMT), serine 93, and asparagine 122. Glutamine 152 is a substrate binding site. Mg(2+) is bound at residue glutamate 153. FMN contacts are provided by residues lysine 184, threonine 214, 259–261 (GIR), and 280–281 (AG).

This sequence belongs to the IPP isomerase type 2 family. As to quaternary structure, homooctamer. Dimer of tetramers. FMN serves as cofactor. The cofactor is NADPH. It depends on Mg(2+) as a cofactor.

The protein resides in the cytoplasm. The catalysed reaction is isopentenyl diphosphate = dimethylallyl diphosphate. Functionally, involved in the biosynthesis of isoprenoids. Catalyzes the 1,3-allylic rearrangement of the homoallylic substrate isopentenyl (IPP) to its allylic isomer, dimethylallyl diphosphate (DMAPP). This Nocardia farcinica (strain IFM 10152) protein is Isopentenyl-diphosphate delta-isomerase.